A 431-amino-acid chain; its full sequence is Enolase (431 aa).

Q163 is a binding site for (2R)-2-phosphoglycerate. Residue E205 is the Proton donor of the active site. The Mg(2+) site is built by D242, E288, and D315. The (2R)-2-phosphoglycerate site is built by K340, R369, S370, and K391. K340 (proton acceptor) is an active-site residue.

It belongs to the enolase family. Requires Mg(2+) as cofactor.

Its subcellular location is the cytoplasm. It is found in the secreted. The protein localises to the cell surface. It catalyses the reaction (2R)-2-phosphoglycerate = phosphoenolpyruvate + H2O. It functions in the pathway carbohydrate degradation; glycolysis; pyruvate from D-glyceraldehyde 3-phosphate: step 4/5. Catalyzes the reversible conversion of 2-phosphoglycerate (2-PG) into phosphoenolpyruvate (PEP). It is essential for the degradation of carbohydrates via glycolysis. In Bacillus anthracis (strain A0248), this protein is Enolase.